Here is a 273-residue protein sequence, read N- to C-terminus: Peptide deformylase 1B, chloroplastic/mitochondrial (273 aa).

A chloroplast and mitochondrion-targeting transit peptide spans 1 to 56 (MAVCNCFLQAPPLSRILLPVLSRRATTLSAGYGRLKSTVTFCSTVNRTSPLTSSVR). Residues Cys-171 and His-213 each coordinate Fe cation. The active site involves Glu-214. Residue His-217 participates in Fe cation binding. Residues 246-261 (YEEKTGLPSPERVEAR) show a composition bias toward basic and acidic residues. Residues 246-273 (YEEKTGLPSPERVEARQKRKAGVGFGKR) are disordered. Positions 262–273 (QKRKAGVGFGKR) are enriched in basic residues.

Belongs to the polypeptide deformylase family. In terms of assembly, homodimer. Requires Fe(2+) as cofactor. Expressed in leaves and flowers.

The protein resides in the plastid. It localises to the chloroplast stroma. Its subcellular location is the mitochondrion. It carries out the reaction N-terminal N-formyl-L-methionyl-[peptide] + H2O = N-terminal L-methionyl-[peptide] + formate. Inhibited by actinonin. In terms of biological role, removes the formyl group from the N-terminal Met of newly synthesized proteins. Has a preferred substrate specificity towards the photosystem II (PS II) D1 polypeptide. In Arabidopsis thaliana (Mouse-ear cress), this protein is Peptide deformylase 1B, chloroplastic/mitochondrial (PDF1B).